Consider the following 512-residue polypeptide: MESVIFSINGEIIQVNKEIITASPYNFFKRIQDHHLKDEAIILNGINYHAFESLLDYMRWKKINITINNVEMILVAAVIIDVPPVVDLCVKTMIHNINSTNCIRMFNFSKRYGIKKLYNASMSEIINNITAVTSDPEFGKLSKDELTTILSHEDVNVNHEDVTAMILLKWIHKNPNDVDIINILHPKFMTNTMRNAISLLGLTISKSTKPVTRNGIKHNIVVIKNSDYISTITHYSPRTEYWTIVGNTDRQFYNANVLHNCLYIIGGMINNRHVYSVSRVDLETKKWKTVTNMSSLKSEVSTCVNDGKLYVIGGLEFSISTGVAEYLKHGTSKWIRLPNLITPRYSGASVFVNDDIYVMGGVYTTYEKYVVLNDVECFTKNRWIKKSPMPRHHSIVYAVEYDGDIYVITGITHETRNYLYKYIVKEDKWIELYMYFNHVGKMFVCSCGDYILIIADAKYEYYPKSNTWNLFDMSTRNIEYYDMFTKDETPKCNVTHKSLPSFLSNCEKQFLQ.

One can recognise a BTB domain in the interval 2 to 67; the sequence is ESVIFSINGE…MRWKKINITI (66 aa). Kelch repeat units lie at residues 216-261, 262-307, 309-354, 356-403, 405-449, and 452-498; these read IKHN…LHNC, LYII…VNDG, LYVI…FVND, IYVM…EYDG, IYVI…SCGD, and LIIA…THKS.

Belongs to the poxviruses Kelch family.

This is Kelch repeat protein C2 from Vaccinia virus (strain Copenhagen) (VACV).